The following is a 273-amino-acid chain: Large ribosomal subunit protein uL2 (273 aa).

Disordered stretches follow at residues 32 to 53 (PLVE…TTRH) and 221 to 273 (RGTA…RRSK). Low complexity predominate over residues 39–48 (KSGGRNNNGR).

This sequence belongs to the universal ribosomal protein uL2 family. In terms of assembly, part of the 50S ribosomal subunit. Forms a bridge to the 30S subunit in the 70S ribosome.

One of the primary rRNA binding proteins. Required for association of the 30S and 50S subunits to form the 70S ribosome, for tRNA binding and peptide bond formation. It has been suggested to have peptidyltransferase activity; this is somewhat controversial. Makes several contacts with the 16S rRNA in the 70S ribosome. This Erwinia tasmaniensis (strain DSM 17950 / CFBP 7177 / CIP 109463 / NCPPB 4357 / Et1/99) protein is Large ribosomal subunit protein uL2.